A 173-amino-acid polypeptide reads, in one-letter code: Crossover junction endodeoxyribonuclease RuvC (173 aa).

Active-site residues include aspartate 8, glutamate 67, and aspartate 139. Mg(2+)-binding residues include aspartate 8, glutamate 67, and aspartate 139.

This sequence belongs to the RuvC family. In terms of assembly, homodimer which binds Holliday junction (HJ) DNA. The HJ becomes 2-fold symmetrical on binding to RuvC with unstacked arms; it has a different conformation from HJ DNA in complex with RuvA. In the full resolvosome a probable DNA-RuvA(4)-RuvB(12)-RuvC(2) complex forms which resolves the HJ. Requires Mg(2+) as cofactor.

It is found in the cytoplasm. The enzyme catalyses Endonucleolytic cleavage at a junction such as a reciprocal single-stranded crossover between two homologous DNA duplexes (Holliday junction).. In terms of biological role, the RuvA-RuvB-RuvC complex processes Holliday junction (HJ) DNA during genetic recombination and DNA repair. Endonuclease that resolves HJ intermediates. Cleaves cruciform DNA by making single-stranded nicks across the HJ at symmetrical positions within the homologous arms, yielding a 5'-phosphate and a 3'-hydroxyl group; requires a central core of homology in the junction. The consensus cleavage sequence is 5'-(A/T)TT(C/G)-3'. Cleavage occurs on the 3'-side of the TT dinucleotide at the point of strand exchange. HJ branch migration catalyzed by RuvA-RuvB allows RuvC to scan DNA until it finds its consensus sequence, where it cleaves and resolves the cruciform DNA. The protein is Crossover junction endodeoxyribonuclease RuvC of Vibrio vulnificus (strain YJ016).